Here is a 199-residue protein sequence, read N- to C-terminus: Protein GrpE (199 aa).

Residues 1–24 (MSKQNKKDWKKFKDEHKEEHKVEN) are compositionally biased toward basic and acidic residues. The interval 1–47 (MSKQNKKDWKKFKDEHKEEHKVENEILEEEIDEKSQHQEPALGHPSY) is disordered.

This sequence belongs to the GrpE family. Homodimer.

Its subcellular location is the cytoplasm. In terms of biological role, participates actively in the response to hyperosmotic and heat shock by preventing the aggregation of stress-denatured proteins, in association with DnaK and GrpE. It is the nucleotide exchange factor for DnaK and may function as a thermosensor. Unfolded proteins bind initially to DnaJ; upon interaction with the DnaJ-bound protein, DnaK hydrolyzes its bound ATP, resulting in the formation of a stable complex. GrpE releases ADP from DnaK; ATP binding to DnaK triggers the release of the substrate protein, thus completing the reaction cycle. Several rounds of ATP-dependent interactions between DnaJ, DnaK and GrpE are required for fully efficient folding. This is Protein GrpE from Legionella pneumophila (strain Paris).